The following is a 223-amino-acid chain: Orotate phosphoribosyltransferase (223 aa).

Residues Arg-107, Lys-108, Lys-111, His-113, and 133-141 contribute to the 5-phospho-alpha-D-ribose 1-diphosphate site; that span reads EDLTTAGGS. Thr-137 contributes to the orotate binding site. Over residues 192–211 the composition is skewed to low complexity; it reads SPGSRSSSTTRRCRKSSPSS. Residues 192–212 form a disordered region; that stretch reads SPGSRSSSTTRRCRKSSPSSM.

This sequence belongs to the purine/pyrimidine phosphoribosyltransferase family. PyrE subfamily. In terms of assembly, homodimer. It depends on Mg(2+) as a cofactor.

The catalysed reaction is orotidine 5'-phosphate + diphosphate = orotate + 5-phospho-alpha-D-ribose 1-diphosphate. It participates in pyrimidine metabolism; UMP biosynthesis via de novo pathway; UMP from orotate: step 1/2. Catalyzes the transfer of a ribosyl phosphate group from 5-phosphoribose 1-diphosphate to orotate, leading to the formation of orotidine monophosphate (OMP). This chain is Orotate phosphoribosyltransferase (pyrE), found in Rhizobium leguminosarum bv. trifolii.